A 175-amino-acid chain; its full sequence is Apoptosis regulator Bcl-2 homolog (175 aa).

Positions 75–94 (QVLEDKINWGRIITIIAFCA) match the BH1 motif. The BH2 signature appears at 105–120 (SPQYYDGIISEAITDA).

The protein belongs to the Bcl-2 family. As to quaternary structure, interacts with host BAX; this interaction inhibits BAX oligomerization and subsequent activation. Interacts with host BAK1.

It localises to the host mitochondrion. Its function is as follows. Plays a role in the inhibition of host apoptosis by sequestering and inactivating multiple proapoptotic BCL-2 proteins, including BAK1 and BAX. The protein is Apoptosis regulator Bcl-2 homolog of Vertebrata (FPV).